The chain runs to 116 residues: UPF0102 protein Sala_0262 (116 aa).

Belongs to the UPF0102 family.

The chain is UPF0102 protein Sala_0262 from Sphingopyxis alaskensis (strain DSM 13593 / LMG 18877 / RB2256) (Sphingomonas alaskensis).